The chain runs to 305 residues: Alpha-N-acetylgalactosaminide alpha-2,6-sialyltransferase 3 (305 aa).

At 1 to 8 the chain is on the cytoplasmic side; sequence MACILKRK. Residues 9-28 form a helical; Signal-anchor for type II membrane protein membrane-spanning segment; it reads SVIAVSFIAAFLFLLVVRLV. Topologically, residues 29-305 are lumenal; that stretch reads NEVNFPLLLN…IFTHPNWTLS (277 aa). Cys-80 and Cys-229 are oxidised to a cystine. 3 N-linked (GlcNAc...) asparagine glycosylation sites follow: Asn-148, Asn-239, and Asn-301.

This sequence belongs to the glycosyltransferase 29 family. In terms of tissue distribution, expressed in brain and kidney. Observed in the epithelium of the proximal tubules, marginal expression was also found in the distal tubules and collecting tubules.

The protein localises to the golgi apparatus membrane. It carries out the reaction an alpha-Neu5Ac-(2-&gt;3)-beta-D-Gal-(1-&gt;3)-D-GlcNAc derivative + CMP-N-acetyl-beta-neuraminate = an alpha-Neu5Ac-(2-&gt;3)-beta-D-Gal-(1-&gt;3)-[alpha-Neu5Ac-(2-&gt;6)]-D-GlcNAc derivative + CMP + H(+). The enzyme catalyses a ganglioside GM1b (d18:1(4E)) + CMP-N-acetyl-beta-neuraminate = a ganglioside GD1alpha (d18:1(4E)) + CMP + H(+). It catalyses the reaction a globoside MSGG + CMP-N-acetyl-beta-neuraminate = a globoside DSGG + CMP + H(+). The catalysed reaction is 3-O-[alpha-Neu5Ac-(2-&gt;3)-beta-D-Gal-(1-&gt;3)-alpha-D-GalNAc]-L-Ser-[protein] + CMP-N-acetyl-beta-neuraminate = a 3-O-{alpha-Neu5Ac-(2-&gt;3)-beta-D-Gal-(1-&gt;3)-[alpha-Neu5Ac-(2-&gt;6)]-alpha-D-GalNAc}-L-seryl-[protein] + CMP + H(+). It carries out the reaction 3-O-[alpha-Neu5Ac-(2-&gt;3)-beta-D-Gal-(1-&gt;3)-alpha-D-GalNAc]-L-Thr-[protein] + CMP-N-acetyl-beta-neuraminate = a 3-O-{alpha-Neu5Ac-(2-&gt;3)-beta-D-Gal-(1-&gt;3)-[alpha-Neu5Ac-(2-&gt;6)]-alpha-D-GalNAc}-L-threonyl-[protein] + CMP + H(+). It functions in the pathway protein modification; protein glycosylation. Its pathway is glycolipid biosynthesis. Its function is as follows. Transfers the sialyl group (N-acetyl-alpha-neuraminyl or NeuAc) from CMP-NeuAc to the GalNAc residue on the NeuAc-alpha-2,3-Gal-beta-1,3-GalNAc sequence of glycoproteins and glycolipids forming an alpha-2,6-linkage. Produces branched type disialyl structures by transfer of a sialyl group onto a GalNAc residue inside the backbone core chains. ST6GalNAcIII prefers glycolipids to glycoproteins, predominantly catalyzing the biosynthesis of ganglioside GD1alpha from GM1b. GD1alpha is a critical molecule in the communication and interaction between neuronal cells and their supportive cells, particularly in brain tissues, and functions as an adhesion molecule in the process of metastasis. Sialylation of glycoproteins or glycosphingolipids is very important in tumor development, neuronal development, nerve repair, immunological processes and regulation of hormone sensitivity. This Homo sapiens (Human) protein is Alpha-N-acetylgalactosaminide alpha-2,6-sialyltransferase 3 (ST6GALNAC3).